The chain runs to 411 residues: Citrate synthase (411 aa).

Residues His-304 and Asp-363 contribute to the active site.

Belongs to the citrate synthase family.

It carries out the reaction oxaloacetate + acetyl-CoA + H2O = citrate + CoA + H(+). Its pathway is carbohydrate metabolism; tricarboxylic acid cycle; isocitrate from oxaloacetate: step 1/2. The sequence is that of Citrate synthase (gltA) from Rickettsia helvetica.